A 307-amino-acid chain; its full sequence is 4-hydroxy-3-methylbut-2-enyl diphosphate reductase (307 aa).

Position 12 (C12) interacts with [4Fe-4S] cluster. Positions 41 and 74 each coordinate (2E)-4-hydroxy-3-methylbut-2-enyl diphosphate. Residues H41 and H74 each contribute to the dimethylallyl diphosphate site. Positions 41 and 74 each coordinate isopentenyl diphosphate. C96 lines the [4Fe-4S] cluster pocket. Residue H124 participates in (2E)-4-hydroxy-3-methylbut-2-enyl diphosphate binding. H124 lines the dimethylallyl diphosphate pocket. Residue H124 coordinates isopentenyl diphosphate. E126 (proton donor) is an active-site residue. T165 serves as a coordination point for (2E)-4-hydroxy-3-methylbut-2-enyl diphosphate. C195 contacts [4Fe-4S] cluster. (2E)-4-hydroxy-3-methylbut-2-enyl diphosphate is bound by residues S223, S224, N225, and S267. Residues S223, S224, N225, and S267 each contribute to the dimethylallyl diphosphate site. Isopentenyl diphosphate-binding residues include S223, S224, N225, and S267.

Belongs to the IspH family. The cofactor is [4Fe-4S] cluster.

It carries out the reaction isopentenyl diphosphate + 2 oxidized [2Fe-2S]-[ferredoxin] + H2O = (2E)-4-hydroxy-3-methylbut-2-enyl diphosphate + 2 reduced [2Fe-2S]-[ferredoxin] + 2 H(+). The catalysed reaction is dimethylallyl diphosphate + 2 oxidized [2Fe-2S]-[ferredoxin] + H2O = (2E)-4-hydroxy-3-methylbut-2-enyl diphosphate + 2 reduced [2Fe-2S]-[ferredoxin] + 2 H(+). The protein operates within isoprenoid biosynthesis; dimethylallyl diphosphate biosynthesis; dimethylallyl diphosphate from (2E)-4-hydroxy-3-methylbutenyl diphosphate: step 1/1. Its pathway is isoprenoid biosynthesis; isopentenyl diphosphate biosynthesis via DXP pathway; isopentenyl diphosphate from 1-deoxy-D-xylulose 5-phosphate: step 6/6. Its function is as follows. Catalyzes the conversion of 1-hydroxy-2-methyl-2-(E)-butenyl 4-diphosphate (HMBPP) into a mixture of isopentenyl diphosphate (IPP) and dimethylallyl diphosphate (DMAPP). Acts in the terminal step of the DOXP/MEP pathway for isoprenoid precursor biosynthesis. The sequence is that of 4-hydroxy-3-methylbut-2-enyl diphosphate reductase from Magnetococcus marinus (strain ATCC BAA-1437 / JCM 17883 / MC-1).